The primary structure comprises 480 residues: Protein disulfide-isomerase 5-4 (480 aa).

2 N-linked (GlcNAc...) asparagine glycosylation sites follow: N74 and N99. One can recognise a Thioredoxin domain in the interval 120–263 (FHAGEVLSLI…LVKMVVSLVE (144 aa)). Active-site nucleophile residues include C170 and C173. C170 and C173 form a disulfide bridge. N280, N326, and N376 each carry an N-linked (GlcNAc...) asparagine glycan. A helical transmembrane segment spans residues 439–459 (FSHFITNVCAIIGGVFTVAGI).

Belongs to the protein disulfide isomerase family. As to expression, widely expressed.

It localises to the membrane. Its function is as follows. Acts as a protein-folding catalyst that interacts with nascent polypeptides to catalyze the formation, isomerization, and reduction or oxidation of disulfide bonds. The chain is Protein disulfide-isomerase 5-4 (PDIL5-4) from Arabidopsis thaliana (Mouse-ear cress).